A 1024-amino-acid chain; its full sequence is Multidrug resistance protein MdtC (1024 aa).

11 helical membrane passes run 15 to 35 (WLLT…LPVA), 333 to 353 (EVEQ…FAFL), 360 to 380 (LIPA…MYLC), 387 to 407 (LSLM…IVVL), 431 to 451 (VGFT…PLLL), 463 to 483 (FAIT…TLTP), 528 to 548 (WGLL…ISIP), 853 to 873 (LWLI…LYES), 897 to 917 (LFNA…IGIV), 953 to 973 (PIIM…LGSG), and 984 to 1004 (ITIV…TPVV).

Belongs to the resistance-nodulation-cell division (RND) (TC 2.A.6) family. MdtC subfamily. As to quaternary structure, part of a tripartite efflux system composed of MdtA, MdtB and MdtC. MdtC forms a heteromultimer with MdtB.

Its subcellular location is the cell inner membrane. The chain is Multidrug resistance protein MdtC from Erwinia tasmaniensis (strain DSM 17950 / CFBP 7177 / CIP 109463 / NCPPB 4357 / Et1/99).